The primary structure comprises 96 residues: MNLRPLHDRVIVKRLDQETKTASGIVIPEAAAEKPDQGEILAVGPGKRDDKGAQIALDVKVGDRVLFGKYAGQTVKVDGNELLVMREEDIMAVVQK.

It belongs to the GroES chaperonin family. In terms of assembly, heptamer of 7 subunits arranged in a ring. Interacts with the chaperonin GroEL.

The protein localises to the cytoplasm. In terms of biological role, together with the chaperonin GroEL, plays an essential role in assisting protein folding. The GroEL-GroES system forms a nano-cage that allows encapsulation of the non-native substrate proteins and provides a physical environment optimized to promote and accelerate protein folding. GroES binds to the apical surface of the GroEL ring, thereby capping the opening of the GroEL channel. In Paraburkholderia phytofirmans (strain DSM 17436 / LMG 22146 / PsJN) (Burkholderia phytofirmans), this protein is Co-chaperonin GroES.